Reading from the N-terminus, the 608-residue chain is UvrABC system protein C (608 aa).

Residues 18–96 (NQPGVYRMYN…IKKYKPRYNV (79 aa)) form the GIY-YIG domain. The region spanning 206 to 241 (KQVIDSLVQHMERASTDLRFEAAARYRDQISALNKV) is the UVR domain.

The protein belongs to the UvrC family. As to quaternary structure, interacts with UvrB in an incision complex.

It localises to the cytoplasm. Functionally, the UvrABC repair system catalyzes the recognition and processing of DNA lesions. UvrC both incises the 5' and 3' sides of the lesion. The N-terminal half is responsible for the 3' incision and the C-terminal half is responsible for the 5' incision. The chain is UvrABC system protein C from Pseudoalteromonas atlantica (strain T6c / ATCC BAA-1087).